A 185-amino-acid polypeptide reads, in one-letter code: Large ribosomal subunit protein uL5 (185 aa).

It belongs to the universal ribosomal protein uL5 family. Part of the 50S ribosomal subunit; part of the 5S rRNA/L5/L18/L25 subcomplex. Contacts the 5S rRNA and the P site tRNA. Forms a bridge to the 30S subunit in the 70S ribosome.

Its function is as follows. This is one of the proteins that bind and probably mediate the attachment of the 5S RNA into the large ribosomal subunit, where it forms part of the central protuberance. In the 70S ribosome it contacts protein S13 of the 30S subunit (bridge B1b), connecting the 2 subunits; this bridge is implicated in subunit movement. Contacts the P site tRNA; the 5S rRNA and some of its associated proteins might help stabilize positioning of ribosome-bound tRNAs. This is Large ribosomal subunit protein uL5 from Chelativorans sp. (strain BNC1).